A 145-amino-acid polypeptide reads, in one-letter code: D-aminoacyl-tRNA deacylase (145 aa).

The short motif at 137 to 138 is the Gly-cisPro motif, important for rejection of L-amino acids element; sequence GP.

This sequence belongs to the DTD family. As to quaternary structure, homodimer.

The protein resides in the cytoplasm. The catalysed reaction is glycyl-tRNA(Ala) + H2O = tRNA(Ala) + glycine + H(+). The enzyme catalyses a D-aminoacyl-tRNA + H2O = a tRNA + a D-alpha-amino acid + H(+). Its function is as follows. An aminoacyl-tRNA editing enzyme that deacylates mischarged D-aminoacyl-tRNAs. Also deacylates mischarged glycyl-tRNA(Ala), protecting cells against glycine mischarging by AlaRS. Acts via tRNA-based rather than protein-based catalysis; rejects L-amino acids rather than detecting D-amino acids in the active site. By recycling D-aminoacyl-tRNA to D-amino acids and free tRNA molecules, this enzyme counteracts the toxicity associated with the formation of D-aminoacyl-tRNA entities in vivo and helps enforce protein L-homochirality. The protein is D-aminoacyl-tRNA deacylase of Shewanella pealeana (strain ATCC 700345 / ANG-SQ1).